The primary structure comprises 146 residues: Peptide methionine sulfoxide reductase MsrB (146 aa).

One can recognise a MsrB domain in the interval 2–125; the sequence is LKKNKDELND…NSAAVQFIPY (124 aa). Residue C114 is the Nucleophile of the active site.

This sequence belongs to the MsrB Met sulfoxide reductase family.

The catalysed reaction is L-methionyl-[protein] + [thioredoxin]-disulfide + H2O = L-methionyl-(R)-S-oxide-[protein] + [thioredoxin]-dithiol. The sequence is that of Peptide methionine sulfoxide reductase MsrB from Staphylococcus carnosus (strain TM300).